The following is a 293-amino-acid chain: 4-hydroxy-tetrahydrodipicolinate synthase (293 aa).

T47 serves as a coordination point for pyruvate. Catalysis depends on Y136, which acts as the Proton donor/acceptor. The active-site Schiff-base intermediate with substrate is the K164. I206 contributes to the pyruvate binding site.

Belongs to the DapA family. In terms of assembly, homotetramer; dimer of dimers.

It localises to the cytoplasm. The catalysed reaction is L-aspartate 4-semialdehyde + pyruvate = (2S,4S)-4-hydroxy-2,3,4,5-tetrahydrodipicolinate + H2O + H(+). Its pathway is amino-acid biosynthesis; L-lysine biosynthesis via DAP pathway; (S)-tetrahydrodipicolinate from L-aspartate: step 3/4. In terms of biological role, catalyzes the condensation of (S)-aspartate-beta-semialdehyde [(S)-ASA] and pyruvate to 4-hydroxy-tetrahydrodipicolinate (HTPA). The chain is 4-hydroxy-tetrahydrodipicolinate synthase from Listeria monocytogenes serovar 1/2a (strain ATCC BAA-679 / EGD-e).